Consider the following 146-residue polypeptide: uncharacterized protein (146 aa).

An N-terminal signal peptide occupies residues 1–24 (MVIYYGKKNCTLLLLLFILCNIYS). Residues Asn99 and Asn106 are each glycosylated (N-linked (GlcNAc...) asparagine).

This is an uncharacterized protein from Saccharomyces cerevisiae (strain ATCC 204508 / S288c) (Baker's yeast).